A 65-amino-acid polypeptide reads, in one-letter code: Large ribosomal subunit protein bL35 (65 aa).

The protein belongs to the bacterial ribosomal protein bL35 family.

The sequence is that of Large ribosomal subunit protein bL35 from Acaryochloris marina (strain MBIC 11017).